We begin with the raw amino-acid sequence, 187 residues long: CASP-like protein 2C1 (187 aa).

Topologically, residues 1–14 are cytoplasmic; sequence MVAAARVVSGVKAE. A helical transmembrane segment spans residues 15-35; it reads GLLRGACAALAAAAALLLGLS. At 36–54 the chain is on the extracellular side; that stretch reads TQTETVLLVRKKGTVKDVQ. A helical transmembrane segment spans residues 55–75; sequence ALWVLAMAAASAAGYHLLQLL. At 76–97 the chain is on the cytoplasmic side; that stretch reads KCLYLGRGGGRALAWTCLLLDK. The helical transmembrane segment at 98–118 threads the bilayer; the sequence is ACAYATFATTVAAAQACVVAL. Topologically, residues 119-139 are extracellular; sequence DGAHALQWTKLCNIYTRFCEQ. The helical transmembrane segment at 140 to 160 threads the bilayer; it reads VAGSLVLGMLAAVGTAVLSAA. The Cytoplasmic portion of the chain corresponds to 161 to 187; the sequence is SARNVFRHYYCSSHSPPAPPPETCDAH.

It belongs to the Casparian strip membrane proteins (CASP) family. Homodimer and heterodimers.

It is found in the cell membrane. This chain is CASP-like protein 2C1, found in Zea mays (Maize).